Here is a 450-residue protein sequence, read N- to C-terminus: MSRRYFGTDGIRGRANGLITPELALKVGQAAGLAFQRGEHRHRVVIGKDTRLSGYMIENALVAGFTSVGMDVLLVGPMPTPAVAMLTKSMRADLGVMISASHNLFEDNGIKLFGPLGYKLSDDVEKQIELMLDESLDKKLAQSASLGRARRIDGVHDRYIEFAKRTLPRELSLEGLRVVIDCANGAAYKVVPEALWELGADVISIGVEPDGFNINKECGSTAPQALCAKVREMRADIGIALDGDADRVILVDERGHVVDGDQLLAVIGQSWKEDGRLAKPGVVATVMSNLGLERFLAGEGIALLRTPVGDRYVLEQMLKDGYNVGGESSGHIILSDFNTTGDGFVAALQVLAMVQKLGRPVSEVCHRFDPLPQILKNVRYRSGRPLDDSGVISAIQDGEKRLNGHGRLLIRPSGTEPVIRVMGEGDDHDVVEEVVDSIVDALGNAAAAAA.

Ser-101 functions as the Phosphoserine intermediate in the catalytic mechanism. The Mg(2+) site is built by Ser-101, Asp-242, Asp-244, and Asp-246. Ser-101 is subject to Phosphoserine.

The protein belongs to the phosphohexose mutase family. The cofactor is Mg(2+). Post-translationally, activated by phosphorylation.

It catalyses the reaction alpha-D-glucosamine 1-phosphate = D-glucosamine 6-phosphate. Its function is as follows. Catalyzes the conversion of glucosamine-6-phosphate to glucosamine-1-phosphate. This Rhodopseudomonas palustris (strain ATCC BAA-98 / CGA009) protein is Phosphoglucosamine mutase.